Here is a 356-residue protein sequence, read N- to C-terminus: Putative ankyrin repeat protein R599 (356 aa).

ANK repeat units follow at residues 111–143, 152–182, 183–213, 215–238, 239–266, and 267–298; these read NDDILLCTAIINCSSECLLYLLDKGIPIDFCDN, RLEKYIYTTRKNKSSCDMLKIVIDRGGNVNT, HNYEPLYSAVNDNNFDKIKLLVENGANKLSD, KRKITNTNLEIFQYLIDNRVELEV, NFDDIFLQSIINDDSECMKLFIELGANI, and NSIPTLELTKIIINARHEILEILINYGLDINN.

This chain is Putative ankyrin repeat protein R599, found in Acanthamoeba polyphaga (Amoeba).